A 920-amino-acid chain; its full sequence is Isoleucine--tRNA ligase (920 aa).

Residues 58 to 68 carry the 'HIGH' region motif; that stretch reads PYANGHLHLGH. Residue Glu569 participates in L-isoleucyl-5'-AMP binding. Residues 610–614 carry the 'KMSKS' region motif; that stretch reads KMSKS. Residue Lys613 coordinates ATP. 4 residues coordinate Zn(2+): Cys895, Cys898, Cys910, and Cys913.

It belongs to the class-I aminoacyl-tRNA synthetase family. IleS type 1 subfamily. Monomer. The cofactor is Zn(2+).

It is found in the cytoplasm. It carries out the reaction tRNA(Ile) + L-isoleucine + ATP = L-isoleucyl-tRNA(Ile) + AMP + diphosphate. In terms of biological role, catalyzes the attachment of isoleucine to tRNA(Ile). As IleRS can inadvertently accommodate and process structurally similar amino acids such as valine, to avoid such errors it has two additional distinct tRNA(Ile)-dependent editing activities. One activity is designated as 'pretransfer' editing and involves the hydrolysis of activated Val-AMP. The other activity is designated 'posttransfer' editing and involves deacylation of mischarged Val-tRNA(Ile). This is Isoleucine--tRNA ligase from Helicobacter pylori (strain ATCC 700392 / 26695) (Campylobacter pylori).